The chain runs to 264 residues: Thymidylate synthase (264 aa).

Residue Arg21 coordinates dUMP. His51 lines the (6R)-5,10-methylene-5,6,7,8-tetrahydrofolate pocket. Residue Arg126–Arg127 participates in dUMP binding. Cys146 serves as the catalytic Nucleophile. DUMP-binding positions include Arg166–Asp169, Asn177, and His207–Tyr209. Residue Asp169 coordinates (6R)-5,10-methylene-5,6,7,8-tetrahydrofolate. Position 263 (Ala263) interacts with (6R)-5,10-methylene-5,6,7,8-tetrahydrofolate.

It belongs to the thymidylate synthase family. Bacterial-type ThyA subfamily. Homodimer.

It is found in the cytoplasm. The enzyme catalyses dUMP + (6R)-5,10-methylene-5,6,7,8-tetrahydrofolate = 7,8-dihydrofolate + dTMP. Its pathway is pyrimidine metabolism; dTTP biosynthesis. In terms of biological role, catalyzes the reductive methylation of 2'-deoxyuridine-5'-monophosphate (dUMP) to 2'-deoxythymidine-5'-monophosphate (dTMP) while utilizing 5,10-methylenetetrahydrofolate (mTHF) as the methyl donor and reductant in the reaction, yielding dihydrofolate (DHF) as a by-product. This enzymatic reaction provides an intracellular de novo source of dTMP, an essential precursor for DNA biosynthesis. In Citrobacter koseri (strain ATCC BAA-895 / CDC 4225-83 / SGSC4696), this protein is Thymidylate synthase.